Here is a 217-residue protein sequence, read N- to C-terminus: Eukaryotic translation initiation factor 4E (217 aa).

The disordered stretch occupies residues 1–30 (MATVEPETTPTPNPPTTEEEKTESNQEVAN). N-acetylalanine is present on A2. The residue at position 22 (T22) is a Phosphothreonine. The EIF4EBP1/2/3 binding stretch occupies residues 37-40 (HPLQ). 56–57 (WQ) provides a ligand contact to mRNA. Positions 73 to 77 (WALYN) are EIF4EBP1/2/3 binding. An mRNA-binding site is contributed by 102-103 (WE). The segment at 132–139 (ETLLCLIG) is EIF4EBP1/2/3 binding. MRNA contacts are provided by residues 157–162 (RAKGDK) and 205–207 (TKS). S209 is subject to Phosphoserine; by PKC and MKNK2.

It belongs to the eukaryotic initiation factor 4E family. In terms of assembly, eIF4F is a multi-subunit complex, the composition of which varies with external and internal environmental conditions. It is composed of at least EIF4A, EIF4E and EIF4G1/EIF4G3. EIF4E is also known to interact with other partners. Interacts with EIF4ENIF1/4E-T; promotes recruitment to P-bodies and import into the nucleus. Hypophosphorylated EIF4EBP1, EIF4EBP2 and EIF4EBP3 compete with EIF4G1/EIF4G3 to interact with EIF4E; insulin stimulated MAP-kinase (MAPK1 and MAPK3) phosphorylation of EIF4EBP1 causes dissociation of the complex allowing EIF4G1/EIF4G3 to bind and consequent initiation of translation. Interacts mutually exclusive with EIF4A1 or EIF4A2. Interacts with NGDN and PIWIL2. Component of the CYFIP1-EIF4E-FMR1 complex composed of CYFIP, EIF4E and FMR1. Interacts directly with CYFIP1. Interacts with CLOCK. Binds to MKNK2 in nucleus. Interacts with LIMD1, WTIP and AJUBA. Interacts with APOBEC3G in an RNA-dependent manner. Interacts with LARP1. Interacts with METTL3. Interacts with RBM24; this interaction prevents EIF4E from binding to p53/TP53 mRNA and inhibits the assembly of translation initiation complex. Interacts with DDX3X; interaction is direct and in an RNA-independent manner; this interaction enhances EIF4E cap-binding ability and is required for the repression of cap-dependent translation and the increase of IRES-mediated translation. DDX3X competes with EIF4G1 for interaction with EIF4E. Interacts with EIF4G1; which in a mutual exclusive interaction associates either with EIF1 or with EIF4E on a common binding site. Interacts with BTG4 and CNOT7. Interacts with LRPPRC (via N-terminus); the interaction promotes association of EIF4E with 4ESE-containing mRNAs. Interacts with mRNA cleavage enzyme CPSF3 and its cofactor CPSF1. Interacts (via RING-type zinc finger) with PML; the interaction results in conformational changes of both interacting proteins and reduces EIF4E affinity for the 5' m7G cap of mRNA, thus reducing EIF4E-mediated mRNA nuclear export. Interacts with homeobox protein HHEX/PRH; the interaction inhibits EIF4E-mediated mRNA nuclear export. Interacts with homeobox protein HOXA9; the interaction positively regulates EIF4E-mediated mRNA nuclear export. Interacts with homeobox protein EMX2. (Microbial infection) Interacts with Lassa virus Z protein. As to quaternary structure, (Microbial infection) Interacts with Lymphocytic choriomeningitis virus (LCMV) Z protein (via RING-type zinc finger); the interaction results in conformational changes of both interacting proteins and reduces EIF4E affinity for the m7G mRNA cap structure. In terms of assembly, (Microbial infection) Interacts (via cap-binding region) with potato virus Y VPg; this interaction mediates the translation of the VPg-viral RNA conjugates and interferes with the cellular EIF4E-dependent mRNA export and translation. Post-translationally, phosphorylation increases the ability of the protein to bind to mRNA caps and to form the eIF4F complex. Phosphorylation also enhances its mRNA transport function. Phosphorylation at Ser-209 is not essential for protein synthesis.

The protein localises to the cytoplasm. Its subcellular location is the P-body. It localises to the stress granule. It is found in the nucleus. The protein resides in the nucleus speckle. The protein localises to the nuclear body. Acts in the cytoplasm to initiate and regulate protein synthesis and is required in the nucleus for export of a subset of mRNAs from the nucleus to the cytoplasm which promotes processes such as RNA capping, processing and splicing. Component of the protein complex eIF4F, which is involved in the recognition of the mRNA cap, ATP-dependent unwinding of 5'-terminal secondary structure and recruitment of mRNA to the ribosome. This protein recognizes and binds the 7-methylguanosine (m7G)-containing mRNA cap during an early step in the initiation of protein synthesis and facilitates ribosome binding by inducing the unwinding of the mRNAs secondary structures. Together with EIF4G1, antagonizes the scanning promoted by EIF1-EIF4G1 and is required for TISU translation, a process where the TISU element recognition makes scanning unnecessary. In addition to its role in translation initiation, also acts as a regulator of translation and stability in the cytoplasm. Component of the CYFIP1-EIF4E-FMR1 complex which binds to the mRNA cap and mediates translational repression: in the complex, EIF4E mediates the binding to the mRNA cap. Component of a multiprotein complex that sequesters and represses translation of proneurogenic factors during neurogenesis. In P-bodies, component of a complex that mediates the storage of translationally inactive mRNAs in the cytoplasm and prevents their degradation. May play an important role in spermatogenesis through translational regulation of stage-specific mRNAs during germ cell development. As well as its roles in translation, also involved in mRNA nucleocytoplasmic transport. Its role in mRNA export from the nucleus to the cytoplasm relies on its ability to bind the m7G cap of RNAs and on the presence of the 50-nucleotide EIF4E sensitivity element (4ESE) in the 3'UTR of sensitive transcripts. Interaction with the 4ESE is mediated by LRPPRC which binds simultaneously to both EIF4E and the 4ESE, thereby acting as a platform for assembly for the RNA export complex. EIF4E-dependent mRNA export is independent of ongoing protein or RNA synthesis and is also NFX1-independent but is XPO1-dependent with LRPPRC interacting with XPO1 to form an EIF4E-dependent mRNA export complex. Alters the composition of the cytoplasmic face of the nuclear pore to promote RNA export by reducing RANBP2 expression, relocalizing nucleoporin NUP214 and increasing expression of RANBP1 and RNA export factors DDX19 and GLE1. Promotes the nuclear export of cyclin CCND1 mRNA. Promotes the nuclear export of NOS2/iNOS mRNA. Promotes the nuclear export of MDM2 mRNA. Promotes the export of additional mRNAs, including others involved in the cell cycle. In the nucleus, binds to capped splice factor-encoding mRNAs and stimulates their nuclear export to enhance splice factor production by increasing their cytoplasmic availability to the translation machinery. May also regulate splicing through interaction with the spliceosome in an RNA and m7G cap-dependent manner. Also binds to some pre-mRNAs and may play a role in their recruitment to the spliceosome. Promotes steady-state capping of a subset of coding and non-coding RNAs by mediating nuclear export of capping machinery mRNAs including RNMT, RNGTT and RAMAC to enhance their translation. Stimulates mRNA 3'-end processing by promoting the expression of several core cleavage complex factors required for mRNA cleavage and polyadenylation, and may also have a direct effect through its interaction with the CPSF3 cleavage enzyme. Rescues cells from apoptosis by promoting activation of serine/threonine-protein kinase AKT1 through mRNA export of NBS1 which potentiates AKT1 phosphorylation and also through mRNA export of AKT1 effectors, allowing for increased production of these proteins. The polypeptide is Eukaryotic translation initiation factor 4E (Homo sapiens (Human)).